A 498-amino-acid chain; its full sequence is Pentatricopeptide repeat-containing protein At2g15980 (498 aa).

PPR repeat units follow at residues 244–274, 280–314, 315–349, 350–384, 385–423, 424–458, and 459–489; these read NATTFNSMMVSFYREGETEMVERIWREMEEE, NVYSYNVLMEAYCARGLMSEAEKVWEEMKVRGVVY, DIVAYNTMIGGLCSNFEVVKAKELFRDMGLKGIEC, TCLTYEHLVNGYCKAGDVDSGLVVYREMKRKGFEA, DGLTIEALVEGLCDDRDGQRVVEAADIVKDAVREAMFYP, SRNCYELLVKRLCEDGKMDRALNIQAEMVGKGFKP, and SQETYRAFIDGYGIVGDEETSALLAIEMAES.

This sequence belongs to the PPR family. P subfamily.

This Arabidopsis thaliana (Mouse-ear cress) protein is Pentatricopeptide repeat-containing protein At2g15980.